Reading from the N-terminus, the 425-residue chain is Cell adhesion molecule CEACAM16 (425 aa).

A signal peptide spans M1–A20. N-linked (GlcNAc...) asparagine glycosylation occurs at N36. Ig-like C2-type domains are found at residues P133–T218 and P223–V309. Residues C153 and C201 are joined by a disulfide bond. An N-linked (GlcNAc...) asparagine glycan is attached at N216. A disulfide bond links C252 and C293. The N-linked (GlcNAc...) asparagine glycan is linked to N394.

This sequence belongs to the immunoglobulin superfamily. CEA family. In terms of assembly, homooligomer; can for homodimers and homotetramers. Interacts with TECTA and TECTB.

It is found in the secreted. Its function is as follows. Required for proper hearing, plays a role in maintaining the integrity of the tectorial membrane. This Homo sapiens (Human) protein is Cell adhesion molecule CEACAM16.